Here is a 292-residue protein sequence, read N- to C-terminus: tRNA(Ile)-lysidine synthase (292 aa).

32-37 (SGGADS) provides a ligand contact to ATP.

The protein belongs to the tRNA(Ile)-lysidine synthase family.

The protein resides in the cytoplasm. The catalysed reaction is cytidine(34) in tRNA(Ile2) + L-lysine + ATP = lysidine(34) in tRNA(Ile2) + AMP + diphosphate + H(+). Its function is as follows. Ligates lysine onto the cytidine present at position 34 of the AUA codon-specific tRNA(Ile) that contains the anticodon CAU, in an ATP-dependent manner. Cytidine is converted to lysidine, thus changing the amino acid specificity of the tRNA from methionine to isoleucine. The polypeptide is tRNA(Ile)-lysidine synthase (Corynebacterium diphtheriae (strain ATCC 700971 / NCTC 13129 / Biotype gravis)).